A 350-amino-acid chain; its full sequence is RNA 3'-terminal phosphate cyclase (350 aa).

ATP contacts are provided by residues Gln-107 and 290-294 (FLGDQ). Catalysis depends on His-316, which acts as the Tele-AMP-histidine intermediate.

This sequence belongs to the RNA 3'-terminal cyclase family. Type 1 subfamily.

It is found in the cytoplasm. It carries out the reaction a 3'-end 3'-phospho-ribonucleotide-RNA + ATP = a 3'-end 2',3'-cyclophospho-ribonucleotide-RNA + AMP + diphosphate. In terms of biological role, catalyzes the conversion of 3'-phosphate to a 2',3'-cyclic phosphodiester at the end of RNA. The mechanism of action of the enzyme occurs in 3 steps: (A) adenylation of the enzyme by ATP; (B) transfer of adenylate to an RNA-N3'P to produce RNA-N3'PP5'A; (C) and attack of the adjacent 2'-hydroxyl on the 3'-phosphorus in the diester linkage to produce the cyclic end product. The biological role of this enzyme is unknown but it is likely to function in some aspects of cellular RNA processing. This chain is RNA 3'-terminal phosphate cyclase, found in Gloeothece citriformis (strain PCC 7424) (Cyanothece sp. (strain PCC 7424)).